We begin with the raw amino-acid sequence, 238 residues long: Ras association domain-containing protein 3 (238 aa).

Residue S2 is modified to N-acetylserine. The tract at residues R26–Y48 is disordered. Residues D38–Y48 are compositionally biased toward basic and acidic residues. The Ras-associating domain maps to Y79 to E186. Residues I187–V234 form the SARAH domain.

In terms of tissue distribution, widely expressed.

The protein localises to the cytoplasm. It is found in the cytoskeleton. This Homo sapiens (Human) protein is Ras association domain-containing protein 3 (RASSF3).